The primary structure comprises 669 residues: Putative heme-binding protein rrnAC3100 (669 aa).

Residue His181 participates in heme binding. 2 disordered regions span residues 260-351 (RVPT…PDVS) and 451-477 (LGGS…ESSQ). The region spanning 579-667 (GTMGMFYTVK…VLADRPRHVF (89 aa)) is the ABM domain.

It in the N-terminal section; belongs to the ChdC family.

In Haloarcula marismortui (strain ATCC 43049 / DSM 3752 / JCM 8966 / VKM B-1809) (Halobacterium marismortui), this protein is Putative heme-binding protein rrnAC3100.